A 425-amino-acid chain; its full sequence is Histidine--tRNA ligase (425 aa).

It belongs to the class-II aminoacyl-tRNA synthetase family. Homodimer.

The protein resides in the cytoplasm. It carries out the reaction tRNA(His) + L-histidine + ATP = L-histidyl-tRNA(His) + AMP + diphosphate + H(+). The chain is Histidine--tRNA ligase from Listeria innocua serovar 6a (strain ATCC BAA-680 / CLIP 11262).